The following is a 384-amino-acid chain: Tryptophan--tRNA ligase (384 aa).

The short motif at 81-89 (PSGPMHIGH) is the 'HIGH' region element. A 'KMSKS' region motif is present at residues 252-256 (KMSAS).

Belongs to the class-I aminoacyl-tRNA synthetase family.

The protein localises to the cytoplasm. It catalyses the reaction tRNA(Trp) + L-tryptophan + ATP = L-tryptophyl-tRNA(Trp) + AMP + diphosphate + H(+). This is Tryptophan--tRNA ligase from Thermococcus onnurineus (strain NA1).